Consider the following 669-residue polypeptide: Major S-layer protein (669 aa).

Residues 1-24 (MKRFAAVSLAALMLLTVFASAASA) form the signal peptide. N-linked (GlcNAc...) asparagine glycans are attached at residues Asn-36, Asn-70, Asn-116, Asn-600, and Asn-607. The interval 588–648 (DGEVVDDDED…PTEADGTTPG (61 aa)) is disordered. The span at 590-627 (EVVDDDEDDDNVTEPVDNDTEVEEPTEEPTEGPTEEPT) shows a compositional bias: acidic residues. A helical transmembrane segment spans residues 645–665 (TTPGFGVVLGLVGLLAVVYLV).

Belongs to the Methanosarcinales S-layer protein family. Post-translationally, glycosylated.

The protein localises to the secreted. The protein resides in the cell wall. It localises to the S-layer. Its subcellular location is the cell membrane. In terms of biological role, S-layer protein. The S-layer is a paracrystalline mono-layered assembly of proteins which coat the surface of the cell. The protein is Major S-layer protein of Methanosarcina mazei (strain ATCC BAA-159 / DSM 3647 / Goe1 / Go1 / JCM 11833 / OCM 88) (Methanosarcina frisia).